The following is a 255-amino-acid chain: Pimeloyl-[acyl-carrier protein] methyl ester esterase (255 aa).

The region spanning 16–242 is the AB hydrolase-1 domain; sequence LVLLHGWGLN…AAHAPFISHP (227 aa). Substrate-binding positions include W22, 82-83, and 143-147; these read SL and FLALQ. Catalysis depends on S82, which acts as the Nucleophile. Residues D207 and H235 contribute to the active site. H235 lines the substrate pocket.

This sequence belongs to the AB hydrolase superfamily. Carboxylesterase BioH family. As to quaternary structure, monomer.

It localises to the cytoplasm. The catalysed reaction is 6-carboxyhexanoyl-[ACP] methyl ester + H2O = 6-carboxyhexanoyl-[ACP] + methanol + H(+). The protein operates within cofactor biosynthesis; biotin biosynthesis. The physiological role of BioH is to remove the methyl group introduced by BioC when the pimeloyl moiety is complete. It allows to synthesize pimeloyl-ACP via the fatty acid synthetic pathway through the hydrolysis of the ester bonds of pimeloyl-ACP esters. This is Pimeloyl-[acyl-carrier protein] methyl ester esterase from Pectobacterium carotovorum subsp. carotovorum (strain PC1).